We begin with the raw amino-acid sequence, 31 residues long: MLTIISYFLFLIGALTLALVLFIGLNKIQLI.

A helical transmembrane segment spans residues 4–24 (IISYFLFLIGALTLALVLFIG).

The protein belongs to the PetL family. The 4 large subunits of the cytochrome b6-f complex are cytochrome b6, subunit IV (17 kDa polypeptide, PetD), cytochrome f and the Rieske protein, while the 4 small subunits are PetG, PetL, PetM and PetN. The complex functions as a dimer.

It localises to the plastid. The protein resides in the chloroplast thylakoid membrane. Component of the cytochrome b6-f complex, which mediates electron transfer between photosystem II (PSII) and photosystem I (PSI), cyclic electron flow around PSI, and state transitions. PetL is important for photoautotrophic growth as well as for electron transfer efficiency and stability of the cytochrome b6-f complex. The chain is Cytochrome b6-f complex subunit 6 from Marchantia polymorpha (Common liverwort).